A 306-amino-acid chain; its full sequence is Reaction center protein M chain (306 aa).

Transmembrane regions (helical) follow at residues Gly53–Asn79, Gly111–Lys140, and Thr143–Gly168. The (7R,8Z)-bacteriochlorophyll b site is built by His181 and His201. Residues Asn198–Ser226 traverse the membrane as a helical segment. His218 and Glu233 together coordinate Fe cation. Trp251 contributes to the a ubiquinone binding site. The chain crosses the membrane as a helical span at residues Thr260 to Thr286. His265 provides a ligand contact to Fe cation.

Belongs to the reaction center PufL/M/PsbA/D family. As to quaternary structure, reaction center is composed of four bacteriochlorophylls, two bacteriopheophytins, two ubiquinones, one iron, and three highly hydrophobic polypeptide chains (designated L, M, and H).

It is found in the cellular chromatophore membrane. Its function is as follows. The reaction center is a membrane-bound complex that mediates the initial photochemical event in the electron transfer process of photosynthesis. The chain is Reaction center protein M chain (pufM) from Rhodospirillum rubrum.